Consider the following 366-residue polypeptide: Anhydro-N-acetylmuramic acid kinase (366 aa).

Position 12 to 19 (12 to 19) interacts with ATP; the sequence is GTSMDGAD.

Belongs to the anhydro-N-acetylmuramic acid kinase family.

It carries out the reaction 1,6-anhydro-N-acetyl-beta-muramate + ATP + H2O = N-acetyl-D-muramate 6-phosphate + ADP + H(+). It functions in the pathway amino-sugar metabolism; 1,6-anhydro-N-acetylmuramate degradation. It participates in cell wall biogenesis; peptidoglycan recycling. Its function is as follows. Catalyzes the specific phosphorylation of 1,6-anhydro-N-acetylmuramic acid (anhMurNAc) with the simultaneous cleavage of the 1,6-anhydro ring, generating MurNAc-6-P. Is required for the utilization of anhMurNAc either imported from the medium or derived from its own cell wall murein, and thus plays a role in cell wall recycling. The polypeptide is Anhydro-N-acetylmuramic acid kinase (Neisseria meningitidis serogroup C (strain 053442)).